A 504-amino-acid polypeptide reads, in one-letter code: ATP synthase subunit alpha 2 (504 aa).

169–176 (GDRQTGKT) contacts ATP.

This sequence belongs to the ATPase alpha/beta chains family. F-type ATPases have 2 components, CF(1) - the catalytic core - and CF(0) - the membrane proton channel. CF(1) has five subunits: alpha(3), beta(3), gamma(1), delta(1), epsilon(1). CF(0) has three main subunits: a(1), b(2) and c(9-12). The alpha and beta chains form an alternating ring which encloses part of the gamma chain. CF(1) is attached to CF(0) by a central stalk formed by the gamma and epsilon chains, while a peripheral stalk is formed by the delta and b chains.

The protein localises to the cell membrane. The catalysed reaction is ATP + H2O + 4 H(+)(in) = ADP + phosphate + 5 H(+)(out). Functionally, produces ATP from ADP in the presence of a proton gradient across the membrane. The alpha chain is a regulatory subunit. In Listeria welshimeri serovar 6b (strain ATCC 35897 / DSM 20650 / CCUG 15529 / CIP 8149 / NCTC 11857 / SLCC 5334 / V8), this protein is ATP synthase subunit alpha 2.